Reading from the N-terminus, the 421-residue chain is Carboxypeptidase A4 (421 aa).

An N-terminal signal peptide occupies residues 1-16 (MRWILFIGALIGSSIC). Positions 17 to 113 (GQEKFFGDQV…EMQHNEGQER (97 aa)) are cleaved as a propeptide — activation peptide. A protein contacts are provided by Pro69, Val71, Asn119, Tyr123, His124, Ser125, Glu127, and Phe163. A Peptidase M14 domain is found at 122–416 (AYHSLEAIYH…LGLKTIMEHV (295 aa)). 2 residues coordinate Zn(2+): His181 and Glu184. Positions 196, 197, and 248 each coordinate a protein. Cys250 and Cys273 are oxidised to a cystine. Asn260 carries N-linked (GlcNAc...) asparagine glycosylation. Residue Asp270 participates in a protein binding. His308 contributes to the Zn(2+) binding site. Glu382 functions as the Proton donor/acceptor in the catalytic mechanism.

The protein belongs to the peptidase M14 family. As to quaternary structure, monomer. Interacts with LXN. Zn(2+) serves as cofactor. As to expression, fetal expression in the adrenal gland, brain, heart, intestine, kidney, liver and lung. Except for fetal brain that shows no imprinting, expression was found preferentially from the maternal allele.

The protein resides in the secreted. With respect to regulation, inhibited by interaction with the metallocarboxypeptidase inhibitor (MCPI) from N.versicolor that binds to the catalytic zinc ion. Also inhibited by interaction with the S.magnifica carboxypeptidase inhibitor SmCI that penetrates the active site groove and inhibits activity by emulating a C-terminal substrate. Additionally inhibited by a carboxypeptidase inhibitor from H.medicinalis (leech) and R.bursa (tick). Metalloprotease that cleaves hydrophobic C-terminal residues with a preference for -Phe, -Leu, -Ile, -Met, -Tyr and -Val. May function in peptide hormone and/or neuropeptide catabolism. The protein is Carboxypeptidase A4 (CPA4) of Homo sapiens (Human).